We begin with the raw amino-acid sequence, 719 residues long: ATP-dependent RNA helicase SUV3 homolog, mitochondrial (719 aa).

A mitochondrion-targeting transit peptide spans 1–18 (MRRASGVLRVLGGLTQRC). The segment at 16 to 42 (QRCSTSSTPSSSRFPAMNSRRKRNSVR) is disordered. Positions 181-319 (EARSVTRKIF…PAAIDIVKKL (139 aa)) constitute a Helicase ATP-binding domain. 194–201 (GPTNSGKT) contacts ATP. Residues 343–499 (KAIESYSNIE…PTYDQIETFS (157 aa)) form the Helicase C-terminal domain. Residues 662–692 (SKAAGSSKSSEGKRENPSKSEREKPNKRSSI) form a disordered region. Positions 671–687 (SEGKRENPSKSEREKPN) are enriched in basic and acidic residues. The stretch at 693-717 (LEALLKRADISEDDLEQLREELNKN) forms a coiled coil.

This sequence belongs to the helicase family. Requires Mg(2+) as cofactor. Mn(2+) serves as cofactor.

Its subcellular location is the mitochondrion matrix. The protein resides in the nucleus. It carries out the reaction ATP + H2O = ADP + phosphate + H(+). In terms of biological role, ATPase and DNA/RNA helicase able to unwind DNA/DNA, DNA/RNA and RNA/RNA duplexes in the 5'-3' direction. The chain is ATP-dependent RNA helicase SUV3 homolog, mitochondrial from Caenorhabditis elegans.